Here is a 159-residue protein sequence, read N- to C-terminus: Transcription elongation factor A protein-like 1 (159 aa).

The tract at residues 1 to 120 is disordered; that stretch reads MEKACKEPEE…PQFRGDIHGR (120 aa). Residues 17–34 are compositionally biased toward basic and acidic residues; sequence KADEERPSVEPSPEKSSP. Over residues 37 to 54 the composition is skewed to acidic residues; it reads QSSEEVSSEEEFFPDELL. Basic and acidic residues-rich tracts occupy residues 64 to 80 and 95 to 119; these read SEER…DLFE and HKLE…DIHG.

It belongs to the TFS-II family. TFA subfamily.

It is found in the nucleus. May be involved in transcriptional regulation. Modulates various viral and cellular promoters in a promoter context-dependent manner. Does not bind DNA directly. The sequence is that of Transcription elongation factor A protein-like 1 from Bos taurus (Bovine).